We begin with the raw amino-acid sequence, 330 residues long: Aspartate--ammonia ligase (330 aa).

Belongs to the class-II aminoacyl-tRNA synthetase family. AsnA subfamily.

It is found in the cytoplasm. It catalyses the reaction L-aspartate + NH4(+) + ATP = L-asparagine + AMP + diphosphate + H(+). The protein operates within amino-acid biosynthesis; L-asparagine biosynthesis; L-asparagine from L-aspartate (ammonia route): step 1/1. This is Aspartate--ammonia ligase from Streptococcus agalactiae serotype III (strain NEM316).